The following is a 785-amino-acid chain: Proprotein convertase subtilisin/kexin type 7 (785 aa).

Residues 1-37 form the signal peptide; the sequence is MPKGRQKVPHLDAPLGLPTCLWLELAGLFLLVPWVMG. Residues 38 to 141 constitute a propeptide that is removed on maturation; it reads LAGTGGPDGQ…EQRLLRRAKR (104 aa). The Extracellular segment spans residues 142-667; sequence SVHFNDPKYP…YTITPNTLKT (526 aa). The Peptidase S8 domain maps to 153–473; that stretch reads QWHLNNRRSP…FGLLNAWRLV (321 aa). Asparagine 167 and asparagine 175 each carry an N-linked (GlcNAc...) asparagine glycan. Aspartate 187 functions as the Charge relay system in the catalytic mechanism. Residues 197–219 form a disordered region; that stretch reads IAPNYSPEGSYDLNSNDPDPMPH. Histidine 228 functions as the Charge relay system in the catalytic mechanism. N-linked (GlcNAc...) asparagine glycosylation is present at asparagine 241. Serine 406 functions as the Charge relay system in the catalytic mechanism. The P/Homo B domain maps to 481–618; it reads SVPYLASYVS…QLTLYGSVWS (138 aa). An N-linked (GlcNAc...) asparagine glycan is attached at asparagine 511. Residues 668–688 traverse the membrane as a helical segment; sequence LVLVGCFTVFWTVYYMLEVYL. The Cytoplasmic portion of the chain corresponds to 689 to 785; sequence SQRNVASNQV…VPHGKEEQIC (97 aa). Residues 700-751 form a disordered region; it reads RSGPCHWPHRSRKAKEEGTELESVPLCSSKDPDEVETESRGPPTTSDLLAPD.

It belongs to the peptidase S8 family. It depends on Ca(2+) as a cofactor. In terms of processing, cysteine residues in the cytoplasmic tail are probably palmitoylated. N-glycosylated. Expressed in spleen, thymus, prostate, testis, ovary, small intestine, colon and peripheral blood leukocyte.

It localises to the golgi apparatus. It is found in the trans-Golgi network membrane. Inhibited by zinc and copper. In terms of biological role, serine endoprotease that processes various proproteins by cleavage at paired basic amino acids, recognizing the RXXX[KR]R consensus motif. Likely functions in the constitutive secretory pathway. The chain is Proprotein convertase subtilisin/kexin type 7 (PCSK7) from Homo sapiens (Human).